Reading from the N-terminus, the 257-residue chain is Imidazole glycerol phosphate synthase subunit HisF (257 aa).

Active-site residues include Asp-12 and Asp-131.

Belongs to the HisA/HisF family. As to quaternary structure, heterodimer of HisH and HisF.

Its subcellular location is the cytoplasm. The enzyme catalyses 5-[(5-phospho-1-deoxy-D-ribulos-1-ylimino)methylamino]-1-(5-phospho-beta-D-ribosyl)imidazole-4-carboxamide + L-glutamine = D-erythro-1-(imidazol-4-yl)glycerol 3-phosphate + 5-amino-1-(5-phospho-beta-D-ribosyl)imidazole-4-carboxamide + L-glutamate + H(+). The protein operates within amino-acid biosynthesis; L-histidine biosynthesis; L-histidine from 5-phospho-alpha-D-ribose 1-diphosphate: step 5/9. In terms of biological role, IGPS catalyzes the conversion of PRFAR and glutamine to IGP, AICAR and glutamate. The HisF subunit catalyzes the cyclization activity that produces IGP and AICAR from PRFAR using the ammonia provided by the HisH subunit. The sequence is that of Imidazole glycerol phosphate synthase subunit HisF from Marinobacter nauticus (strain ATCC 700491 / DSM 11845 / VT8) (Marinobacter aquaeolei).